Reading from the N-terminus, the 132-residue chain is UPF0299 membrane protein YohJ (132 aa).

At 1-6 (MSKTLN) the chain is on the periplasmic side. Residues 7–27 (IIWQYLRAFVLIYACLYAGIF) traverse the membrane as a helical segment. Residues 28–30 (IAS) are Cytoplasmic-facing. The chain crosses the membrane as a helical span at residues 31 to 51 (LLPVTIPGSIIGMLILFVLLA). Topologically, residues 52 to 62 (LQILPAKWVNP) are periplasmic. Residues 63 to 83 (GCYVLIRYMALLFVPIGVGVM) form a helical membrane-spanning segment. Residues 84–92 (QYFDLLRAQ) lie on the Cytoplasmic side of the membrane. The helical transmembrane segment at 93-113 (FGPVVVSCAISTLVVFLVVSW) threads the bilayer. The Periplasmic portion of the chain corresponds to 114–132 (SSQLVHGERKVVGQKGSEE).

The protein belongs to the UPF0299 family.

The protein resides in the cell inner membrane. This is UPF0299 membrane protein YohJ (yohJ) from Escherichia coli O157:H7.